The primary structure comprises 288 residues: HTH-type transcriptional regulator CzcR (288 aa).

Residues 1 to 58 form the HTH lysR-type domain; that stretch reads MELRDLQIFQSVADQGSVSSAAKELNYVQSNVTARIKQLENELKTPLFYRHKRGMTLT. The H-T-H motif DNA-binding region spans 18–37; the sequence is VSSAAKELNYVQSNVTARIK.

The protein belongs to the LysR transcriptional regulatory family.

The chain is HTH-type transcriptional regulator CzcR (czcR) from Bacillus cereus (strain ATCC 10987 / NRS 248).